The following is a 487-amino-acid chain: Serine carboxypeptidase-like 38 (487 aa).

The signal sequence occupies residues 1-20 (MGKQQDWSVTACIFLSLSLA). Disulfide bonds link C119–C368, C280–C290, and C315–C336. S215 is a catalytic residue. A glycan (N-linked (GlcNAc...) asparagine) is linked at N233. Residues N317 and N357 are each glycosylated (N-linked (GlcNAc...) asparagine). Residue D407 is part of the active site. N423 and N449 each carry an N-linked (GlcNAc...) asparagine glycan. Residue H460 is part of the active site.

It belongs to the peptidase S10 family. Expressed in seedlings, roots, leaves, flowers and siliques.

It is found in the secreted. Its function is as follows. Probable carboxypeptidase. The protein is Serine carboxypeptidase-like 38 (SCPL38) of Arabidopsis thaliana (Mouse-ear cress).